The sequence spans 261 residues: [LysW]-aminoadipate/[LysW]-glutamate kinase (261 aa).

Substrate is bound by residues G35–G36, R62, and N166.

This sequence belongs to the acetylglutamate kinase family. LysZ subfamily.

It localises to the cytoplasm. It catalyses the reaction [amino-group carrier protein]-C-terminal-N-(1,4-dicarboxybutan-1-yl)-L-glutamine + ATP = [amino-group carrier protein]-C-terminal-N-(1-carboxy-5-phosphooxy-5-oxopentan-1-yl)-L-glutamine + ADP. The catalysed reaction is [amino-group carrier protein]-C-terminal-gamma-(L-glutamyl)-L-glutamate + ATP = [amino-group carrier protein]-C-terminal-gamma-(5-phospho-L-glutamyl)-L-glutamate + ADP. Its pathway is amino-acid biosynthesis; L-lysine biosynthesis via AAA pathway; L-lysine from L-alpha-aminoadipate (Thermus route): step 2/5. The protein operates within amino-acid biosynthesis; L-arginine biosynthesis. In terms of biological role, involved in both the arginine and lysine biosynthetic pathways. Phosphorylates the LysW-bound precursors glutamate (for arginine biosynthesis), respectively alpha-aminoadipate (for lysine biosynthesis). In Sulfurisphaera tokodaii (strain DSM 16993 / JCM 10545 / NBRC 100140 / 7) (Sulfolobus tokodaii), this protein is [LysW]-aminoadipate/[LysW]-glutamate kinase.